We begin with the raw amino-acid sequence, 495 residues long: UDP-N-acetylmuramoyl-L-alanyl-D-glutamate--2,6-diaminopimelate ligase (495 aa).

UDP-N-acetyl-alpha-D-muramoyl-L-alanyl-D-glutamate contacts are provided by residues Leu27, Ser29, and 44 to 46 (HQA). 116–122 (GTNGKTT) is an ATP binding site. Residues Asn157, 158 to 159 (TT), Ser185, Gln191, and Arg193 each bind UDP-N-acetyl-alpha-D-muramoyl-L-alanyl-D-glutamate. At Lys225 the chain carries N6-carboxylysine. Meso-2,6-diaminopimelate contacts are provided by residues Arg390, 414–417 (DNPR), Gly465, and Glu469. Positions 414–417 (DNPR) match the Meso-diaminopimelate recognition motif motif.

Belongs to the MurCDEF family. MurE subfamily. It depends on Mg(2+) as a cofactor. Post-translationally, carboxylation is probably crucial for Mg(2+) binding and, consequently, for the gamma-phosphate positioning of ATP.

The protein resides in the cytoplasm. It catalyses the reaction UDP-N-acetyl-alpha-D-muramoyl-L-alanyl-D-glutamate + meso-2,6-diaminopimelate + ATP = UDP-N-acetyl-alpha-D-muramoyl-L-alanyl-gamma-D-glutamyl-meso-2,6-diaminopimelate + ADP + phosphate + H(+). Its pathway is cell wall biogenesis; peptidoglycan biosynthesis. Functionally, catalyzes the addition of meso-diaminopimelic acid to the nucleotide precursor UDP-N-acetylmuramoyl-L-alanyl-D-glutamate (UMAG) in the biosynthesis of bacterial cell-wall peptidoglycan. The polypeptide is UDP-N-acetylmuramoyl-L-alanyl-D-glutamate--2,6-diaminopimelate ligase (Escherichia coli O6:H1 (strain CFT073 / ATCC 700928 / UPEC)).